The following is a 311-amino-acid chain: Olfactory receptor 5L2 (311 aa).

The Extracellular portion of the chain corresponds to 1-25 (MGKENCTTVAEFILLGLSDVPELRV). N-linked (GlcNAc...) asparagine glycosylation is present at Asn5. Residues 26-46 (CLFLLFLLIYGVTLLANLGMT) form a helical membrane-spanning segment. Residues 47–54 (ALIQVSSR) lie on the Cytoplasmic side of the membrane. Residues 55-75 (LHTPVYFFLSHLSFVDFCYSS) form a helical membrane-spanning segment. At 76-99 (IIVPKMLANIFNKDKAISFLGCMV) the chain is on the extracellular side. Residues Cys97 and Cys189 are joined by a disulfide bond. The helical transmembrane segment at 100–120 (QFYLFCTCGVTEVFLLAVMAY) threads the bilayer. Topologically, residues 121–139 (DRFVAICNPLLYMVTMSQK) are cytoplasmic. The chain crosses the membrane as a helical span at residues 140–160 (LRVELTSCCYFCGTVCSLIHS). Over 161–196 (SLALRILFYRSNVINHFFCDLPPLLSLACSDVTVNE) the chain is Extracellular. Asn195 carries an N-linked (GlcNAc...) asparagine glycan. The helical transmembrane segment at 197-217 (TLLFLVATLNESVTIMIILTS) threads the bilayer. At 218-237 (YLLILTTILKIHSAESRHKA) the chain is on the cytoplasmic side. Residues 238 to 258 (FSTCASHLTAITVSHGTILYI) form a helical membrane-spanning segment. Residues 259–271 (YCRPSSGNSGDVD) are Extracellular-facing. A helical transmembrane segment spans residues 272–292 (KVATVFYTVVIPMLNPLIYSL). At 293–311 (RNKDVNKALRKVMGSKIHS) the chain is on the cytoplasmic side.

This sequence belongs to the G-protein coupled receptor 1 family.

Its subcellular location is the cell membrane. Functionally, odorant receptor. The polypeptide is Olfactory receptor 5L2 (OR5L2) (Homo sapiens (Human)).